The chain runs to 886 residues: Alanine--tRNA ligase (886 aa).

Residues His568, His572, Cys670, and His674 each coordinate Zn(2+).

The protein belongs to the class-II aminoacyl-tRNA synthetase family. Zn(2+) serves as cofactor.

Its subcellular location is the cytoplasm. The enzyme catalyses tRNA(Ala) + L-alanine + ATP = L-alanyl-tRNA(Ala) + AMP + diphosphate. Functionally, catalyzes the attachment of alanine to tRNA(Ala) in a two-step reaction: alanine is first activated by ATP to form Ala-AMP and then transferred to the acceptor end of tRNA(Ala). Also edits incorrectly charged Ser-tRNA(Ala) and Gly-tRNA(Ala) via its editing domain. This is Alanine--tRNA ligase from Prochlorococcus marinus (strain NATL2A).